Consider the following 316-residue polypeptide: Annexin A13 (316 aa).

Residue Gly2 is the site of N-myristoyl glycine attachment. Annexin repeat units follow at residues 14–85 (FDVD…ALLD), 86–157 (RPSE…SLLQ), 169–241 (DLAG…TLVR), and 245–316 (DQEG…ALLH).

The protein belongs to the annexin family. In terms of assembly, monomer and homodimer. As to expression, detected in intestine, and at much lower levels also in kidney (at protein level).

The protein resides in the apical cell membrane. It is found in the cell membrane. It localises to the cytoplasmic vesicle. In terms of biological role, binds to membranes enriched in phosphatidylserine or phosphatidylglycerol in a calcium-dependent manner. Half-maximal membrane binding requires about 60 uM calcium. Does not bind to membranes that lack phospholipids with an acidic headgroup. Functionally, binds to membranes enriched in phosphatidylserine or phosphatidylglycerol in a calcium-dependent manner, but requires higher calcium levels for membrane binding than isoform A. Half-maximal membrane binding requires about 320 uM calcium. May play a role in vesicular traffic to the apical plasma membrane. The polypeptide is Annexin A13 (ANXA13) (Canis lupus familiaris (Dog)).